A 527-amino-acid polypeptide reads, in one-letter code: Transcription initiation factor TFIID subunit 6b (527 aa).

In terms of domain architecture, Histone-fold spans 3–99; sequence TKESIEVIAQ…NLEPTSGSKS (97 aa). 2 disordered regions span residues 410 to 442 and 462 to 492; these read SPPT…THQP and MRGT…PKTS. Composition is skewed to polar residues over residues 416–427 and 462–473; these read VWKTNGKLTSPR and MRGTTTVPQQSH.

Belongs to the TAF6 family. Component of the TFIID complex. TFIID is composed of TATA binding protein (TBP) and a number of TBP-associated factors (TAFs) whose MWs range from 14-217 kDa. Interacts with TAF5 and TAF9. Expressed in roots, leaves, inflorescences and siliques.

It localises to the nucleus. Its function is as follows. TAFs are components of the transcription factor IID (TFIID) complex that is essential for mediating regulation of RNA polymerase transcription. Not redundant with TAF6. This chain is Transcription initiation factor TFIID subunit 6b (TAF6B), found in Arabidopsis thaliana (Mouse-ear cress).